Here is a 236-residue protein sequence, read N- to C-terminus: Small ribosomal subunit protein uS2c (236 aa).

It belongs to the universal ribosomal protein uS2 family.

It localises to the plastid. The protein resides in the chloroplast. The chain is Small ribosomal subunit protein uS2c (rps2) from Eucalyptus globulus subsp. globulus (Tasmanian blue gum).